A 151-amino-acid polypeptide reads, in one-letter code: FUN14 domain-containing protein 2 (151 aa).

Residues 1–42 are Cytoplasmic-facing; the sequence is MAANSQGNFDGKFEALDLAELTKKQPWWRKLFGQESGPSAEK. A helical transmembrane segment spans residues 43–63; the sequence is YSVATQLVIGGVTGWCTGFVF. Topologically, residues 64–69 are mitochondrial intermembrane; that stretch reads QKVGKL. A helical transmembrane segment spans residues 70–90; it reads AATAVGGGFFLLQLANHTGYI. Residues 91 to 126 are Cytoplasmic-facing; that stretch reads KVDWQRVEKDMKKAKEQLKIRKNKQIPTEVKSKAEE. Residues 127–147 form a helical membrane-spanning segment; sequence VVSFVKKNVLVTGGFFGGFLL. Residues 148-151 are Mitochondrial intermembrane-facing; it reads GMAS.

It belongs to the FUN14 family. Highly expressed in platelet (at protein level). Expressed in liver, brain, heart and muscle.

The protein resides in the mitochondrion outer membrane. It localises to the nucleus. In terms of biological role, binds directly and specifically 1,2-Diacyl-sn-glycero-3-phospho-(1'-myo-inositol-3',4',5'-bisphosphate) (PIP3) leading to the recruitment of PIP3 to mitochondria and may play a role in the regulation of the platelet activation via AKT/GSK3B/cGMP signaling pathways. May act as transcription factor that regulates SREBP1 (isoform SREBP-1C) expression in order to modulate triglyceride (TG) homeostasis in hepatocytes. In Mus musculus (Mouse), this protein is FUN14 domain-containing protein 2.